Here is a 218-residue protein sequence, read N- to C-terminus: tRNA (guanine-N(7)-)-methyltransferase (218 aa).

Positions methionine 1–proline 26 are disordered. Positions valine 13–proline 26 are enriched in basic and acidic residues. S-adenosyl-L-methionine contacts are provided by glutamate 45, glutamate 70, aspartate 97, and aspartate 119. Residue aspartate 119 is part of the active site. Lysine 123 is a binding site for substrate. Residues arginine 125 to arginine 130 form an interaction with RNA region. Residues aspartate 155 and threonine 195–glutamate 198 contribute to the substrate site.

The protein belongs to the class I-like SAM-binding methyltransferase superfamily. TrmB family.

The enzyme catalyses guanosine(46) in tRNA + S-adenosyl-L-methionine = N(7)-methylguanosine(46) in tRNA + S-adenosyl-L-homocysteine. The protein operates within tRNA modification; N(7)-methylguanine-tRNA biosynthesis. Functionally, catalyzes the formation of N(7)-methylguanine at position 46 (m7G46) in tRNA. This is tRNA (guanine-N(7)-)-methyltransferase from Lactobacillus delbrueckii subsp. bulgaricus (strain ATCC 11842 / DSM 20081 / BCRC 10696 / JCM 1002 / NBRC 13953 / NCIMB 11778 / NCTC 12712 / WDCM 00102 / Lb 14).